A 677-amino-acid chain; its full sequence is Transketolase (677 aa).

Histidine 27 provides a ligand contact to substrate. Residues histidine 66 and 114-116 (GPL) each bind thiamine diphosphate. Residue aspartate 155 participates in Mg(2+) binding. Thiamine diphosphate is bound by residues glycine 156 and asparagine 185. Asparagine 185 and isoleucine 187 together coordinate Mg(2+). Substrate contacts are provided by histidine 261, arginine 356, and serine 383. Residue histidine 261 participates in thiamine diphosphate binding. 2 residues coordinate thiamine diphosphate: glutamate 415 and phenylalanine 442. Catalysis depends on glutamate 415, which acts as the Proton donor. Substrate contacts are provided by histidine 466, aspartate 474, and arginine 525.

Belongs to the transketolase family. Homodimer. The cofactor is Mg(2+). Ca(2+) serves as cofactor. Mn(2+) is required as a cofactor. Requires Co(2+) as cofactor. It depends on thiamine diphosphate as a cofactor.

It catalyses the reaction D-sedoheptulose 7-phosphate + D-glyceraldehyde 3-phosphate = aldehydo-D-ribose 5-phosphate + D-xylulose 5-phosphate. Catalyzes the transfer of a two-carbon ketol group from a ketose donor to an aldose acceptor, via a covalent intermediate with the cofactor thiamine pyrophosphate. The protein is Transketolase (TKT) of Scheffersomyces stipitis (strain ATCC 58785 / CBS 6054 / NBRC 10063 / NRRL Y-11545) (Yeast).